A 387-amino-acid polypeptide reads, in one-letter code: Omega-6 fatty acid desaturase, endoplasmic reticulum isozyme 1 (387 aa).

Helical transmembrane passes span 54–74 (LLTS…FYIA) and 87–107 (LIAW…VWVI). Positions 109-113 (HECGH) match the Histidine box-1 motif. Residues 121-141 (WVDDVVGLTLHSTLLVPYFSW) form a helical membrane-spanning segment. The Histidine box-2 signature appears at 145–149 (HRRHH). Transmembrane regions (helical) follow at residues 183 to 203 (AVSL…FNVS), 227 to 247 (LLIY…YRVA), and 251 to 271 (GLVW…GFLV). A Histidine box-3 motif is present at residues 319–323 (HVAHH).

It belongs to the fatty acid desaturase type 1 family. Strongly expressed in developing seeds.

Its subcellular location is the endoplasmic reticulum membrane. The protein operates within lipid metabolism; polyunsaturated fatty acid biosynthesis. ER (microsomal) omega-6 fatty acid desaturase introduces the second double bond in the biosynthesis of 18:3 fatty acids, important constituents of plant membranes. It is thought to use cytochrome b5 as an electron donor and to act on fatty acids esterified to phosphatidylcholine and, possibly, other phospholipids. The chain is Omega-6 fatty acid desaturase, endoplasmic reticulum isozyme 1 (FAD2-1) from Glycine max (Soybean).